The primary structure comprises 307 residues: Non-homologous end joining protein Ku (307 aa).

The Ku domain maps to 11–179 (LSFGLVSIPV…EVRSMKDLNI (169 aa)). Composition is skewed to low complexity over residues 257–267 (RGGAKAKPAAA) and 290–307 (ARAP…RARK). Residues 257-307 (RGGAKAKPAAAPRRKAPEPVAGMAEATRARKPAARAPKSPAEAPAKVRARK) are disordered.

The protein belongs to the prokaryotic Ku family. As to quaternary structure, homodimer. Interacts with LigD.

In terms of biological role, with LigD forms a non-homologous end joining (NHEJ) DNA repair enzyme, which repairs dsDNA breaks with reduced fidelity. Binds linear dsDNA with 5'- and 3'- overhangs but not closed circular dsDNA nor ssDNA. Recruits and stimulates the ligase activity of LigD. The sequence is that of Non-homologous end joining protein Ku from Paraburkholderia phymatum (strain DSM 17167 / CIP 108236 / LMG 21445 / STM815) (Burkholderia phymatum).